Here is a 205-residue protein sequence, read N- to C-terminus: Molybdopterin synthase catalytic subunit (205 aa).

The segment at 1-36 is disordered; it reads MQHPTLQPEVDPNPVVSSSSSSSSSNPLPAHLNPAN. Residues 146-147, lysine 162, and 169-171 each bind substrate; these read HR and KRE. A disordered region spans residues 179-205; sequence GEGEGEWRANRDTDSQGNCRGDKVAEG. A compositionally biased stretch (basic and acidic residues) spans 183 to 205; the sequence is GEWRANRDTDSQGNCRGDKVAEG.

It belongs to the MoaE family. MOCS2B subfamily. Heterotetramer; composed of 2 small (MOCS2A) and 2 large (MOCS2B) subunits.

It localises to the cytoplasm. The enzyme catalyses 2 [molybdopterin-synthase sulfur-carrier protein]-C-terminal-Gly-aminoethanethioate + cyclic pyranopterin phosphate + H2O = molybdopterin + 2 [molybdopterin-synthase sulfur-carrier protein]-C-terminal Gly-Gly + 2 H(+). It functions in the pathway cofactor biosynthesis; molybdopterin biosynthesis. Catalytic subunit of the molybdopterin synthase complex, a complex that catalyzes the conversion of precursor Z into molybdopterin. Acts by mediating the incorporation of 2 sulfur atoms from thiocarboxylated MOCS2A into precursor Z to generate a dithiolene group. This chain is Molybdopterin synthase catalytic subunit, found in Ajellomyces capsulatus (strain NAm1 / WU24) (Darling's disease fungus).